Here is a 403-residue protein sequence, read N- to C-terminus: Phosphopentomutase (403 aa).

Mn(2+) contacts are provided by D13, D298, H303, D339, H340, and H351.

It belongs to the phosphopentomutase family. Mn(2+) is required as a cofactor.

The protein localises to the cytoplasm. It catalyses the reaction 2-deoxy-alpha-D-ribose 1-phosphate = 2-deoxy-D-ribose 5-phosphate. The enzyme catalyses alpha-D-ribose 1-phosphate = D-ribose 5-phosphate. Its pathway is carbohydrate degradation; 2-deoxy-D-ribose 1-phosphate degradation; D-glyceraldehyde 3-phosphate and acetaldehyde from 2-deoxy-alpha-D-ribose 1-phosphate: step 1/2. In terms of biological role, isomerase that catalyzes the conversion of deoxy-ribose 1-phosphate (dRib-1-P) and ribose 1-phosphate (Rib-1-P) to deoxy-ribose 5-phosphate (dRib-5-P) and ribose 5-phosphate (Rib-5-P), respectively. In Streptococcus pyogenes serotype M4 (strain MGAS10750), this protein is Phosphopentomutase.